Consider the following 141-residue polypeptide: Large-conductance mechanosensitive channel (141 aa).

2 helical membrane-spanning segments follow: residues 21–41 (VGVIIGGAFGKIVDSIVGDLI) and 85–105 (GSFLTILVNFIILAFIIFMMV).

Belongs to the MscL family. In terms of assembly, homopentamer.

Its subcellular location is the cell inner membrane. Functionally, channel that opens in response to stretch forces in the membrane lipid bilayer. May participate in the regulation of osmotic pressure changes within the cell. The protein is Large-conductance mechanosensitive channel of Dechloromonas aromatica (strain RCB).